We begin with the raw amino-acid sequence, 990 residues long: Bifunctional glutamine synthetase adenylyltransferase/adenylyl-removing enzyme (990 aa).

The adenylyl removase stretch occupies residues Met-1–Pro-474. The segment at Ala-478 to Ala-990 is adenylyl transferase.

It belongs to the GlnE family. Requires Mg(2+) as cofactor.

The catalysed reaction is [glutamine synthetase]-O(4)-(5'-adenylyl)-L-tyrosine + phosphate = [glutamine synthetase]-L-tyrosine + ADP. It catalyses the reaction [glutamine synthetase]-L-tyrosine + ATP = [glutamine synthetase]-O(4)-(5'-adenylyl)-L-tyrosine + diphosphate. In terms of biological role, involved in the regulation of glutamine synthetase GlnA, a key enzyme in the process to assimilate ammonia. When cellular nitrogen levels are high, the C-terminal adenylyl transferase (AT) inactivates GlnA by covalent transfer of an adenylyl group from ATP to specific tyrosine residue of GlnA, thus reducing its activity. Conversely, when nitrogen levels are low, the N-terminal adenylyl removase (AR) activates GlnA by removing the adenylyl group by phosphorolysis, increasing its activity. The regulatory region of GlnE binds the signal transduction protein PII (GlnB) which indicates the nitrogen status of the cell. The protein is Bifunctional glutamine synthetase adenylyltransferase/adenylyl-removing enzyme of Rhodopseudomonas palustris (strain ATCC BAA-98 / CGA009).